A 323-amino-acid polypeptide reads, in one-letter code: Probable cell division protein WhiA (323 aa).

Residues Thr275 to Ser309 constitute a DNA-binding region (H-T-H motif).

Belongs to the WhiA family.

In terms of biological role, involved in cell division and chromosome segregation. The sequence is that of Probable cell division protein WhiA from Listeria monocytogenes serotype 4b (strain CLIP80459).